The chain runs to 397 residues: Elongation factor Tu (397 aa).

Residues 10–207 form the tr-type G domain; the sequence is KPHCNIGTIG…AVDEYIPQPE (198 aa). Residues 19-26 form a G1 region; sequence GHVDHGKT. 19 to 26 contributes to the GTP binding site; that stretch reads GHVDHGKT. Mg(2+) is bound at residue Thr-26. The interval 61–65 is G2; it reads GITIS. The interval 82-85 is G3; it reads DCPG. GTP contacts are provided by residues 82–86 and 137–140; these read DCPGH and NKVD. Residues 137–140 are G4; it reads NKVD. The G5 stretch occupies residues 175–177; the sequence is SAL.

This sequence belongs to the TRAFAC class translation factor GTPase superfamily. Classic translation factor GTPase family. EF-Tu/EF-1A subfamily. As to quaternary structure, monomer.

The protein resides in the cytoplasm. It catalyses the reaction GTP + H2O = GDP + phosphate + H(+). Its function is as follows. GTP hydrolase that promotes the GTP-dependent binding of aminoacyl-tRNA to the A-site of ribosomes during protein biosynthesis. This chain is Elongation factor Tu, found in Zymomonas mobilis subsp. mobilis (strain ATCC 31821 / ZM4 / CP4).